We begin with the raw amino-acid sequence, 548 residues long: MSASYVSDLHINVKGVPFHLCKEMLAKRSSKVSSLLERNEIDELRLILRDLEVDPETFELVARFCNGSEFKFTSDTIVSVLCIAYYLGMNEEQSSNNLLGKASEFLEHRVFPSWSETINALRSGDKSFDKLADVGLVDVFFDSLIEKASYDPRLLGELIKNRAETDDYRPNPRRRLFVIDWKSEDLITIPLRLYEPFMIRAIKSRSIPVEYIVLSVCKYAKKWVFDTEESLSGQKREAIEVVERLLPYQRGLISCELLFESLKHSIWLEASSECQNGFMIRICKQLDMAKSTDLKILSRGYGEKAEGFENIELVKTVVKSFYTYYANEDSETVSHFVKVAKLSEEFLFLAASEASLKLEAFVELAEMTVAVSQGILSYSDGIYRAIDVFLESHRYLTESEKMEVCKVLECGKLSQEGFERAAKNQKLPLRIVVNVLCVSQLQIRDTVAKEIKGMEEKVDEEEEEEIEVSSDEDEMEKMSNKLLGLEIENDECVVHRRKNMKKKKKKISVWGQVKRKFGCLNSSSSSYSVDACTCDVKKKKKKIHHHYE.

Residues 7–74 enclose the BTB domain; sequence SDLHINVKGV…CNGSEFKFTS (68 aa). The region spanning 180–442 is the NPH3 domain; that stretch reads DWKSEDLITI…VNVLCVSQLQ (263 aa). Tyr383 bears the Phosphotyrosine mark. Residues 442–493 adopt a coiled-coil conformation; the sequence is QIRDTVAKEIKGMEEKVDEEEEEEIEVSSDEDEMEKMSNKLLGLEIENDECV.

This sequence belongs to the NPH3 family.

Its pathway is protein modification; protein ubiquitination. In terms of biological role, may act as a substrate-specific adapter of an E3 ubiquitin-protein ligase complex (CUL3-RBX1-BTB) which mediates the ubiquitination and subsequent proteasomal degradation of target proteins. The polypeptide is BTB/POZ domain-containing protein At5g17580 (Arabidopsis thaliana (Mouse-ear cress)).